The following is a 156-amino-acid chain: Small ribosomal subunit protein uS7 (156 aa).

This sequence belongs to the universal ribosomal protein uS7 family. As to quaternary structure, part of the 30S ribosomal subunit. Contacts proteins S9 and S11.

Functionally, one of the primary rRNA binding proteins, it binds directly to 16S rRNA where it nucleates assembly of the head domain of the 30S subunit. Is located at the subunit interface close to the decoding center, probably blocks exit of the E-site tRNA. The protein is Small ribosomal subunit protein uS7 of Streptococcus gordonii (strain Challis / ATCC 35105 / BCRC 15272 / CH1 / DL1 / V288).